The sequence spans 769 residues: Serine protease HtrA-like (769 aa).

The segment covering 1-20 (MDIGKKHVIPKSQYRRKRRE) has biased composition (basic residues). Residues 1–390 (MDIGKKHVIP…ATSKLNKGRA (390 aa)) are disordered. Basic and acidic residues-rich tracts occupy residues 21–64 (FFHN…ERFK) and 71–108 (LEQRNRDVNENKAEESKSNQDSKSAYNRDHYLTDDVSK). Over residues 126–137 (YEQNSEATLSTK) the composition is skewed to polar residues. Basic and acidic residues predominate over residues 138 to 186 (STDKVESSDMRKLSPDKNKVGHEEQHVLSKPSEHDKETRIDFESSRTDS). 2 stretches are compositionally biased toward polar residues: residues 202–221 (GNESSNLKSEVISDKSNTVP) and 247–262 (QQSQNEQTKTYTYGDS). Residues 264 to 295 (QNDKSNHENDLSHHTPSKSDDKDNVMREDHIV) show a composition bias toward basic and acidic residues. A compositionally biased stretch (polar residues) spans 298-308 (NPDNDINTPSL). Basic and acidic residues predominate over residues 310–330 (KIDDDRKLDEKIHVEDKHKQN). Residues 331–347 (ADSSETVGYQSQSSVSH) are compositionally biased toward polar residues. Residues 348–362 (RSTEKRNMAINDHHK) are compositionally biased toward basic and acidic residues. Over residues 366–390 (QKLNTKTSANNNQKKATSKLNKGRA) the composition is skewed to polar residues. Residues 410–430 (LVILMGIIILIVILNAIFNNV) traverse the membrane as a helical segment. Active-site charge relay system residues include His504, Asp534, and Ser619. Residues 680 to 733 (IASLNSFERQAVKLPGKVKNGVVVDQVDNNGLADQSSLKKGDVITELDGKLLED) form the PDZ domain.

This sequence belongs to the peptidase S1C family.

The protein resides in the cell membrane. The chain is Serine protease HtrA-like from Staphylococcus aureus (strain bovine RF122 / ET3-1).